The sequence spans 1404 residues: DNA-directed RNA polymerase subunit beta' (1404 aa).

Positions 72, 74, 87, and 90 each coordinate Zn(2+). The Mg(2+) site is built by Asp-463, Asp-465, and Asp-467. Positions 811, 885, 892, and 895 each coordinate Zn(2+).

The protein belongs to the RNA polymerase beta' chain family. As to quaternary structure, the RNAP catalytic core consists of 2 alpha, 1 beta, 1 beta' and 1 omega subunit. When a sigma factor is associated with the core the holoenzyme is formed, which can initiate transcription. Requires Mg(2+) as cofactor. It depends on Zn(2+) as a cofactor.

The enzyme catalyses RNA(n) + a ribonucleoside 5'-triphosphate = RNA(n+1) + diphosphate. Its function is as follows. DNA-dependent RNA polymerase catalyzes the transcription of DNA into RNA using the four ribonucleoside triphosphates as substrates. This is DNA-directed RNA polymerase subunit beta' from Jannaschia sp. (strain CCS1).